A 240-amino-acid polypeptide reads, in one-letter code: MGLEVAADSVGSALAAQDGGAIRVELCGGLDGGGLTPSFGTLAVVRERLQIPLYVLIRPRVGDFVFDAAEVEVMRRDVEQCVRLGCDGVVLGALDPQGQVDLPAMRALIEAAGTLGVTFHRAIDVSADPARVLEDAITLGCERVLTSGARASALEGVETIAALVRQAGERISIMPGAGVSAANVQALRAGTGAREFHASARGPVAAQVHAPHPYITDLGGDYQRTDVARVRSIVQLLQTA.

It belongs to the CutC family.

Its subcellular location is the cytoplasm. In Xanthomonas campestris pv. campestris (strain 8004), this protein is PF03932 family protein CutC.